The sequence spans 383 residues: BRISC and BRCA1-A complex member 2 (383 aa).

UEV-like stretches follow at residues 30–147 and 275–364; these read DATN…TLLE and IAAF…RAKA.

The protein belongs to the BABAM2 family. Component of the ARISC complex, at least composed of UIMC1/RAP80, ABRAXAS1, BRCC3/BRCC36, BABAM2 and BABAM1/NBA1. Component of the BRCA1-A complex, at least composed of BRCA1, BARD1, UIMC1/RAP80, ABRAXAS1, BRCC3/BRCC36, BABAM2 and BABAM1/NBA1. In the BRCA1-A complex, interacts directly with ABRAXAS1, BRCC3/BRCC36 and BABAM1/NBA1. Binds polyubiquitin. Component of the BRISC complex, at least composed of ABRAXAS2, BRCC3/BRCC36, BABAM2 and BABAM1/NBA1. Identified in a complex with SHMT2 and the other subunits of the BRISC complex. Component of the BRCA1/BRCA2 containing complex (BRCC), which also contains BRCA1, BRCA2, BARD1, BRCC3/BRCC36 and RAD51. BRCC is a ubiquitin E3 ligase complex that enhances cellular survival following DNA damage. May interact with FAS and TNFRSF1A.

It is found in the cytoplasm. The protein resides in the nucleus. In terms of biological role, component of the BRCA1-A complex, a complex that specifically recognizes 'Lys-63'-linked ubiquitinated histones H2A and H2AX at DNA lesions sites, leading to target the BRCA1-BARD1 heterodimer to sites of DNA damage at double-strand breaks (DSBs). The BRCA1-A complex also possesses deubiquitinase activity that specifically removes 'Lys-63'-linked ubiquitin on histones H2A and H2AX. In the BRCA1-A complex, it acts as an adapter that bridges the interaction between BABAM1/NBA1 and the rest of the complex, thereby being required for the complex integrity and modulating the E3 ubiquitin ligase activity of the BRCA1-BARD1 heterodimer. Component of the BRISC complex, a multiprotein complex that specifically cleaves 'Lys-63'-linked ubiquitin in various substrates. Within the BRISC complex, acts as an adapter that bridges the interaction between BABAM1/NBA1 and the rest of the complex, thereby being required for the complex integrity. The BRISC complex is required for normal mitotic spindle assembly and microtubule attachment to kinetochores via its role in deubiquitinating NUMA1. The BRISC complex plays a role in interferon signaling via its role in the deubiquitination of the interferon receptor IFNAR1; deubiquitination increases IFNAR1 activity by enhancing its stability and cell surface expression. Down-regulates the response to bacterial lipopolysaccharide (LPS) via its role in IFNAR1 deubiquitination. May play a role in homeostasis or cellular differentiation in cells of neural, epithelial and germline origins. May also act as a death receptor-associated anti-apoptotic protein, which inhibits the mitochondrial apoptotic pathway. May regulate TNF-alpha signaling through its interactions with TNFRSF1A; however these effects may be indirect. This chain is BRISC and BRCA1-A complex member 2 (BABAM2), found in Gallus gallus (Chicken).